We begin with the raw amino-acid sequence, 3011 residues long: MSTNPKPQKKNKRNTNRRPQDVKFPGGGQIVGGVYLLPRRGPRLGVRATRKTSERSQPRGRRQPIPKARRPEGRTWAQPGYPWPLYGNEGCGWAGWLLSPRGSRPSWGPTDPRRRSRNLGKVIDTLTCGFADLMGYIPLVGAPLGGAARALAHGVRVLEDGVNYATGNLPGCSFSIFLLALLSCLTVPASAYQVRNSTGLYHVTNDCPNSSIVYEAADAILHTPGCVPCVREGNASRCWVAMTPTVATRDGKLPATQLRRHIDLLVGSATLCSALYVGDLCGSVFLVGQLFTFSPRRHWTTQGCNCSIYPGHITGHRMAWDMMMNWSPTTALVMAQLLRIPQAILDMIAGAHWGVLAGIAYFSMVGNWAKVLVVLLLFAGVDAETHVTGGSAGHTVSGFVSLLAPGAKQNVQLINTNGSWHLNSTALNCNDSLNTGWLAGLFYHHKFNSSGCPERLASCRPLTDFDQGWGPISYANGSGPDQRPYCWHYPPKPCGIVPAKSVCGPVYCFTPSPVVVGTTDRSGAPTYSWGENDTDVFVLNNTRPPLGNWFGCTWMNSTGFTKVCGAPPCVIGGAGNNTLHCPTDCFRKHPDATYSRCGSGPWITPRCLVDYPYRLWHYPCTINYTIFKIRMYVGGVEHRLEAACNWTRGERCDLEDRDRSELSPLLLTTTQWQVLPCSFTTLPALSTGLIHLHQNIVDVQYLYGVGSSIASWAIKWEYVVLLFLLLADARVCSCLWMMLLISQAEAALENLVILNAASLAGTHGLVSFLVFFCFAWYLKGKWVPGAVYTFYGMWPLLLLLLALPQRAYALDTEVAASCGGVVLVGLMALTLSPYYKRYISWCLWWLQYFLTRVEAQLHVWIPPLNVRGGRDAVILLMCAVHPTLVFDITKLLLAVFGPLWILQASLLKVPYFVRVQGLLRFCALARKMIGGHYVQMVIIKLGALTGTYVYNHLTPLRDWAHNGLRDLAVAVEPVVFSQMETKLITWGADTAACGDIINGLPVSARRGREILLGPADGMVSKGWRLLAPITAYAQQTRGLLGCIITSLTGRDKNQVEGEVQIVSTAAQTFLATCINGVCWTVYHGAGTRTIASPKGPVIQMYTNVDQDLVGWPAPQGSRSLTPCTCGSSDLYLVTRHADVIPVRRRGDSRGSLLSPRPISYLKGSSGGPLLCPAGHAVGIFRAAVCTRGVAKAVDFIPVENLETTMRSPVFTDNSSPPVVPQSFQVAHLHAPTGSGKSTKVPAAYAAQGYKVLVLNPSVAATLGFGAYMSKAHGIDPNIRTGVRTITTGSPITYSTYGKFLADGGCSGGAYDIIICDECHSTDATSILGIGTVLDQAETAGARLVVLATATPPGSVTVPHPNIEEVALSTTGEIPFYGKAIPLEVIKGGRHLIFCHSKKKCDELAAKLVALGINAVAYYRGLDVSVIPTSGDVVVVATDALMTGYTGDFDSVIDCNTCVTQTVDFSLDPTFTIETITLPQDAVSRTQRRGRTGRGKPGIYRFVAPGERPSGMFDSSVLCECYDAGCAWYELTPAETTVRLRAYMNTPGLPVCQDHLEFWEGVFTGLTHIDAHFLSQTKQSGENLPYLVAYQATVCARAQAPPPSWDQMWKCLIRLKPTLHGPTPLLYRLGAVQNEITLTHPVTKYIMTCMSADLEVVTSTWVLVGGVLAALAAYCLSTGCVVIVGRVVLSGKPAIIPDREVLYREFDEMEECSQHLPYIEQGMMLAEQFKQKALGLLQTASRQAEVIAPAVQTNWQKLETFWAKHMWNFISGIQYLAGLSTLPGNPAIASLMAFTAAVTSPLTTSQTLLFNILGGWVAAQLAAPGAATAFVGAGLAGAAIGSVGLGKVLIDILAGYGAGVAGALVAFKIMSGEVPSTEDLVNLLPAILSPGALVVGVVCAAILRRHVGPGEGAVQWMNRLIAFASRGNHVSPTHYVPESDAAARVTAILSSLTVTQLLRRLHQWISSECTTPCSGSWLRDIWDWICEVLSDFKTWLKAKLMPQLPGIPFVSCQRGYKGVWRVDGIMHTRCHCGAEITGHVKNGTMRIVGPRTCRNMWSGTFPINAYTTGPCTPLPAPNYTFALWRVSAEEYVEIRQVGDFHYVTGMTTDNLKCPCQVPSPEFFTELDGVRLHRFAPPCKPLLREEVSFRVGLHEYPVGSQLPCEPEPDVAVLTSMLTDPSHITAEAAGRRLARGSPPSVASSSASQLSAPSLKATCTANHDSPDAELIEANLLWRQEMGGNITRVESENKVVILDSFDPLVAEEDEREISVPAEILRKSRRFAQALPVWARPDYNPPLVETWKKPDYEPPVVHGCPLPPPKSPPVPPPRKKRTVVLTESTLSTALAELATRSFGSSSTSGITGDNTTTSSEPAPSGCPPDSDAESYSSMPPLEGEPGDPDLSDGSWSTVSSEANAEDVVCCSMSYSWTGALVTPCAAEEQKLPINALSNSLLRHHNLVYSTTSRSACQRQKKVTFDRLQVLDSHYQDVLKEVKAAASKVKANLLSVEEACSLTPPHSAKSKFGYGAKDVRCHARKAVTHINSVWKDLLEDNVTPIDTTIMAKNEVFCVQPEKGGRKPARLIVFPDLGVRVCEKMALYDVVTKLPLAVMGSSYGFQYSPGQRVEFLVQAWKSKKTPMGFSYDTRCFDSTVTESDIRTEEAIYQCCDLDPQARVAIKSLTERLYVGGPLTNSRGENCGYRRCRASGVLTTSCGNTLTCYIKARAACRAAGLQDCTMLVCGDDLVVICESAGVQEDAASLRAFTEAMTRYSAPPGDPPQPEYDLELITSCSSNVSVAHDGAGKRVYYLTRDPTTPLARAAWETARHTPVNSWLGNIIMFAPTLWARMILMTHFFSVLIARDQLEQALDCEIYGACYSIEPLDLPPIIQRLHGLSAFSLHSYSPGEINRVAACLRKLGVPPLRAWRHRARSVRARLLARGGRAAICGKYLFNWAVRTKLKLTPIAAAGQLDLSGWFTAGYSGGDIYHSVSHARPRWIWFCLLLLAAGVGIYLLPNR.

Serine 2 is subject to N-acetylserine; by host. Positions 2-23 are interaction with STAT1; it reads STNPKPQKKNKRNTNRRPQDVK. The interaction with EIF2AK2/PKR stretch occupies residues 2 to 58; the sequence is STNPKPQKKNKRNTNRRPQDVKFPGGGQIVGGVYLLPRRGPRLGVRATRKTSERSQP. The interval 2–59 is interaction with DDX3X; it reads STNPKPQKKNKRNTNRRPQDVKFPGGGQIVGGVYLLPRRGPRLGVRATRKTSERSQPR. A disordered region spans residues 2-75; the sequence is STNPKPQKKN…PKARRPEGRT (74 aa). Over 2-168 the chain is Cytoplasmic; that stretch reads STNPKPQKKN…EDGVNYATGN (167 aa). Short sequence motifs (nuclear localization signal) lie at residues 5–13 and 38–43; these read PKPQKKNKR and PRRGPR. A compositionally biased stretch (basic residues) spans 7–16; that stretch reads PQKKNKRNTN. Residues 32-47 show a composition bias toward low complexity; that stretch reads GGVYLLPRRGPRLGVR. Serine 53 bears the Phosphoserine; by host mark. 2 short sequence motifs (nuclear localization signal) span residues 58–64 and 66–71; these read PRGRRQP and PKARRP. Residues 58 to 68 are compositionally biased toward basic residues; the sequence is PRGRRQPIPKA. Serine 99 is modified (phosphoserine; by host). Positions 112–152 are important for endoplasmic reticulum and mitochondrial localization; that stretch reads PRRRSRNLGKVIDTLTCGFADLMGYIPLVGAPLGGAARALA. Phosphoserine; by host PKA is present on serine 116. The interaction with APOA2 stretch occupies residues 122-173; sequence VIDTLTCGFADLMGYIPLVGAPLGGAARALAHGVRVLEDGVNYATGNLPGCS. The interval 164 to 167 is important for lipid droplets localization; it reads YATG. A helical transmembrane segment spans residues 169 to 189; it reads LPGCSFSIFLLALLSCLTVPA. Residues 178–191 constitute a propeptide, ER anchor for the core protein, removed in mature form by host signal peptidase; it reads LLALLSCLTVPASA. At 190 to 358 the chain is on the lumenal side; sequence SAYQVRNSTG…AGAHWGVLAG (169 aa). Residues asparagine 196, asparagine 209, and asparagine 234 are each glycosylated (N-linked (GlcNAc...) asparagine; by host). The interval 265-296 is important for fusion; it reads LVGSATLCSALYVGDLCGSVFLVGQLFTFSPR. Asparagine 305 carries N-linked (GlcNAc...) asparagine; by host glycosylation. The helical transmembrane segment at 359–379 threads the bilayer; that stretch reads IAYFSMVGNWAKVLVVLLLFA. The Lumenal segment spans residues 380-725; it reads GVDAETHVTG…WEYVVLLFLL (346 aa). Residues 385-411 form an HVR1 region; the sequence is THVTGGSAGHTVSGFVSLLAPGAKQNV. Residues asparagine 417, asparagine 423, asparagine 430, and asparagine 448 are each glycosylated (N-linked (GlcNAc...) (high mannose) asparagine; by host). Intrachain disulfides connect cysteine 429–cysteine 552, cysteine 452–cysteine 459, cysteine 486–cysteine 494, and cysteine 503–cysteine 508. The tract at residues 474–480 is HVR2; sequence YANGSGP. An N-linked (GlcNAc...) asparagine; by host glycan is attached at asparagine 476. Residues 481 to 493 are CD81-binding 1; it reads DQRPYCWHYPPKP. Asparagine 532 is a glycosylation site (N-linked (GlcNAc...) (high mannose) asparagine; by host). The CD81-binding 2 stretch occupies residues 543–551; it reads RPPLGNWFG. Asparagine 556 carries N-linked (GlcNAc...) (high mannose) asparagine; by host glycosylation. Cysteines 564 and 569 form a disulfide. Asparagine 576 carries an N-linked (GlcNAc...) (high mannose) asparagine; by host glycan. Disulfide bonds link cysteine 581–cysteine 585, cysteine 597–cysteine 620, and cysteine 607–cysteine 644. Residues asparagine 623 and asparagine 645 are each glycosylated (N-linked (GlcNAc...) (high mannose) asparagine; by host). Cysteine 652 and cysteine 677 are oxidised to a cystine. The tract at residues 660–671 is EIF2AK2/eIF2-alpha phosphorylation homology domain (PePHD); that stretch reads SELSPLLLTTTQ. A helical transmembrane segment spans residues 726–746; that stretch reads LADARVCSCLWMMLLISQAEA. Residues 747–757 lie on the Lumenal side of the membrane; that stretch reads ALENLVILNAA. Residues 758–778 traverse the membrane as a helical segment; the sequence is SLAGTHGLVSFLVFFCFAWYL. The Cytoplasmic portion of the chain corresponds to 779–781; sequence KGK. The helical transmembrane segment at 782–803 threads the bilayer; that stretch reads WVPGAVYTFYGMWPLLLLLLAL. Topologically, residues 804–813 are lumenal; the sequence is PQRAYALDTE. The chain crosses the membrane as a helical span at residues 814–834; that stretch reads VAASCGGVVLVGLMALTLSPY. At 835–838 the chain is on the cytoplasmic side; the sequence is YKRY. The helical transmembrane segment at 839–859 threads the bilayer; it reads ISWCLWWLQYFLTRVEAQLHV. Topologically, residues 860–881 are lumenal; it reads WIPPLNVRGGRDAVILLMCAVH. The helical transmembrane segment at 882–902 threads the bilayer; the sequence is PTLVFDITKLLLAVFGPLWIL. Residues 899–1026 form the Peptidase C18 domain; that stretch reads LWILQASLLK…GMVSKGWRLL (128 aa). Over 903–1657 the chain is Cytoplasmic; it reads QASLLKVPYF…CMSADLEVVT (755 aa). The interval 904 to 1206 is protease NS2-3; sequence ASLLKVPYFV…PVENLETTMR (303 aa). Cysteine 922 carries S-palmitoyl cysteine; by host lipidation. The segment at 929-949 is interaction with host SCPS1; it reads IGGHYVQMVIIKLGALTGTYV. Residues histidine 952, glutamate 972, and cysteine 993 each act as for protease NS2 activity; shared with dimeric partner in the active site. A Peptidase S29 domain is found at 1027 to 1208; it reads APITAYAQQT…ENLETTMRSP (182 aa). Residues histidine 1083 and aspartate 1107 each act as charge relay system; for serine protease NS3 activity in the active site. Cysteine 1123 and cysteine 1125 together coordinate Zn(2+). The active-site Charge relay system; for serine protease NS3 activity is the serine 1165. Zn(2+)-binding residues include cysteine 1171 and histidine 1175. Residues 1217 to 1369 enclose the Helicase ATP-binding domain; sequence PVVPQSFQVA…PNIEEVALST (153 aa). Residue 1230-1237 participates in ATP binding; sequence APTGSGKS. Residues serine 1237 and glutamate 1317 each contribute to the Mg(2+) site. The short motif at 1316–1319 is the DECH box element; that stretch reads DECH. The segment at 1486 to 1497 is RNA-binding; that stretch reads QRRGRTGRGKPG. The chain crosses the membrane as a helical span at residues 1658-1678; the sequence is STWVLVGGVLAALAAYCLSTG. Positions 1679 to 1690 are NS3-binding; sequence CVVIVGRVVLSG. Over 1679 to 1805 the chain is Cytoplasmic; the sequence is CVVIVGRVVL…AVTSPLTTSQ (127 aa). A helical transmembrane segment spans residues 1806 to 1826; it reads TLLFNILGGWVAAQLAAPGAA. Topologically, residues 1827–1828 are lumenal; that stretch reads TA. The chain crosses the membrane as a helical span at residues 1829-1849; the sequence is FVGAGLAGAAIGSVGLGKVLI. A glycine zipper region spans residues 1833–1861; the sequence is GLAGAAIGSVGLGKVLIDILAGYGAGVAG. A topological domain (cytoplasmic) is located at residue aspartate 1850. The chain crosses the membrane as a helical span at residues 1851-1871; that stretch reads ILAGYGAGVAGALVAFKIMSG. Residues 1872–1881 lie on the Lumenal side of the membrane; sequence EVPSTEDLVN. A helical transmembrane segment spans residues 1882–1902; it reads LLPAILSPGALVVGVVCAAIL. Topologically, residues 1903–1972 are cytoplasmic; that stretch reads RRHVGPGEGA…WISSECTTPC (70 aa). 2 S-palmitoyl cysteine; by host lipidation sites follow: cysteine 1968 and cysteine 1972. The stretch at 1973 to 2003 is an intramembrane region; that stretch reads SGSWLRDIWDWICEVLSDFKTWLKAKLMPQL. Residues 1978–1998 are membrane-binding; sequence RDIWDWICEVLSDFKTWLKAK. The Cytoplasmic portion of the chain corresponds to 2004 to 2990; sequence PGIPFVSCQR…YHSVSHARPR (987 aa). The interval 2005–2221 is RNA-binding; the sequence is GIPFVSCQRG…KATCTANHDS (217 aa). Zn(2+)-binding residues include cysteine 2011, cysteine 2029, cysteine 2031, and cysteine 2052. The tract at residues 2120 to 2208 is FKBP8-binding; sequence EFFTELDGVR…ASSSASQLSA (89 aa). Residues 2120-2332 form a transcriptional activation region; the sequence is EFFTELDGVR…PVPPPRKKRT (213 aa). Residues 2135–2139 form an interaction with non-structural protein 4A region; sequence PPCKP. An interaction with host SKP2 region spans residues 2189–2441; sequence RLARGSPPSV…TPCAAEEQKL (253 aa). At serine 2194 the chain carries Phosphoserine; by host; in p56. 5 positions are modified to phosphoserine; by host; in p58: serine 2197, serine 2201, serine 2204, serine 2207, and serine 2210. Residues 2206 to 2245 are ISDR; that stretch reads LSAPSLKATCTANHDSPDAELIEANLLWRQEMGGNITRVE. Residues 2210–2275 form an EIF2AK2/PKR-binding region; it reads SLKATCTANH…REISVPAEIL (66 aa). Residues 2249–2306 form an NS4B-binding region; the sequence is KVVILDSFDPLVAEEDEREISVPAEILRKSRRFAQALPVWARPDYNPPLVETWKKPDY. Disordered stretches follow at residues 2312-2334 and 2351-2408; these read HGCP…RTVV and SFGS…WSTV. Pro residues predominate over residues 2315-2326; it reads PLPPPKSPPVPP. Serine 2321 carries the post-translational modification Phosphoserine; by host. Residues 2322 to 2325 carry the SH3-binding motif; it reads PPVP. The Nuclear localization signal motif lies at 2326 to 2334; that stretch reads PPRKKRTVV. The interval 2332–2441 is interaction with host IFI27; that stretch reads TVVLTESTLS…TPCAAEEQKL (110 aa). Positions 2351–2369 are enriched in low complexity; the sequence is SFGSSSTSGITGDNTTTSS. The interval 2354–2377 is V3; it reads SSSTSGITGDNTTTSSEPAPSGCP. Phosphoserine; by host occurs at positions 2449 and 2462. The RdRp catalytic domain maps to 2634–2752; that stretch reads PMGFSYDTRC…ICESAGVQED (119 aa). Residues aspartate 2640, aspartate 2738, and aspartate 2739 each coordinate Mg(2+). A helical membrane pass occupies residues 2991–3011; that stretch reads WIWFCLLLLAAGVGIYLLPNR.

Belongs to the hepacivirus polyprotein family. Homooligomer. Interacts with E1 (via C-terminus). Interacts with the non-structural protein 5A. Interacts (via N-terminus) with host STAT1 (via SH2 domain); this interaction results in decreased STAT1 phosphorylation and ubiquitin-mediated proteasome-dependent STAT1 degradation, leading to decreased IFN-stimulated gene transcription. Interacts with host STAT3; this interaction constitutively activates STAT3. Interacts with host LTBR receptor. Interacts with host TNFRSF1A receptor and possibly induces apoptosis. Interacts with host HNRPK. Interacts with host YWHAE. Interacts with host UBE3A/E6AP. Interacts with host DDX3X. Interacts with host APOA2. Interacts with host RXRA protein. Interacts with host SP110 isoform 3/Sp110b; this interaction sequesters the transcriptional corepressor SP110 away from the nucleus. Interacts with host CREB3 nuclear transcription protein; this interaction triggers cell transformation. Interacts with host ACY3. Interacts with host C1QR1. Interacts with host RBM24; this interaction, which enhances the interaction of the mature core protein with 5'-UTR, may inhibit viral translation and favor replication. Interacts with host EIF2AK2/PKR; this interaction induces the autophosphorylation of EIF2AK2. Part of the viral assembly initiation complex composed of NS2, E1, E2, NS3, NS4A, NS5A and the mature core protein. As to quaternary structure, forms a heterodimer with envelope glycoprotein E2. Interacts with mature core protein. Interacts with protease NS2. The heterodimer E1/E2 interacts with host CLDN1; this interaction plays a role in viral entry into host cell. Interacts with host SPSB2 (via C-terminus). Part of the viral assembly initiation complex composed of NS2, E1, E2, NS3, NS4A, NS5A and the mature core protein. Interacts with host NEURL3; this interaction prevents E1 binding to glycoprotein E2. In terms of assembly, forms a heterodimer with envelope glycoprotein E1. Interacts with host CD81 and SCARB1 receptors; these interactions play a role in viral entry into host cell. Interacts with host EIF2AK2/PKR; this interaction inhibits EIF2AK2 and probably allows the virus to evade the innate immune response. Interacts with host CD209/DC-SIGN and CLEC4M/DC-SIGNR. Interact with host SPCS1; this interaction is essential for viral particle assembly. Interacts with protease NS2. The heterodimer E1/E2 interacts with host CLDN1; this interaction plays a role in viral entry into host cell. Part of the viral assembly initiation complex composed of NS2, E1, E2, NS3, NS4A, NS5A and the mature core protein. Interacts with host SLC3A2/4F2hc; the interaction may facilitate viral entry into host cell. Interacts with human PLSCR1. Homohexamer. Homoheptamer. Interacts with protease NS2. As to quaternary structure, homodimer. Interacts with host SPCS1; this interaction is essential for viral particle assembly. Interacts with envelope glycoprotein E1. Interacts with envelope glycoprotein E2. Interacts with viroporin p7. Interacts with serine protease/helicase NS3. Part of the replication complex composed of NS2, NS3, NS4A, NS4B, NS5A and the RNA-directed RNA polymerase embedded in an ER-derived membranous web. Part of the viral assembly initiation complex composed of NS2, E1, E2, NS3, NS4A, NS5A and the mature core protein. In terms of assembly, interacts with protease NS2. Interacts with non-structural protein 4A; this interaction stabilizes the folding of NS3 serine protease. NS3-NS4A interaction is essential for NS3 activation and allows membrane anchorage of the latter. NS3/NS4A complex also prevents phosphorylation of host IRF3, thus preventing the establishment of dsRNA induced antiviral state. Interacts with host MAVS; this interaction leads to the cleavage and inhibition of host MAVS. Interacts with host TICAM1; this interaction leads to the cleavage and inhibition of host TICAM1. Interacts with host TANK-binding kinase/TBK1; this interaction results in the inhibition of the association between TBK1 and IRF3, which leads to the inhibition of IRF3 activation. Interacts with host RBM24. Part of the replication complex composed of NS2, NS3, NS4A, NS4B, NS5A and the RNA-directed RNA polymerase embedded in an ER-derived membranous web. Part of the viral assembly initiation complex composed of NS2, E1, E2, NS3, NS4A, NS5A and the mature core protein. Interacts with NS3 serine protease; this interaction stabilizes the folding of NS3 serine protease. NS3-NS4A interaction is essential for NS3 activation and allows membrane anchorage of the latter. Interacts with non-structural protein 5A (via N-terminus). Part of the replication complex composed of NS2, NS3, NS4A, NS4B, NS5A and the RNA-directed RNA polymerase embedded in an ER-derived membranous web. Part of the viral assembly initiation complex composed of NS2, E1, E2, NS3, NS4A, NS5A and the mature core protein. As to quaternary structure, homomultimer. Interacts with non-structural protein NS5A. Interacts with host PLA2G4C; this interaction likely initiates the recruitment of replication complexes to lipid droplets. Interacts with host STING; this interaction disrupts the interaction between STING and TBK1 thereby suppressing the interferon signaling. Part of the replication complex composed of NS2, NS3, NS4A, NS4B, NS5A and the RNA-directed RNA polymerase embedded in an ER-derived membranous web. In terms of assembly, monomer. Homodimer; dimerization is required for RNA-binding. Interacts with mature core protein. Interacts (via N-terminus) with non-structural protein 4A. Interacts with non-structural protein 4B. Interacts with RNA-directed RNA polymerase. Part of the viral assembly initiation complex composed of NS2, E1, E2, NS3, NS4A, NS5A and the mature core protein. Part of the replication complex composed of NS2, NS3, NS4A, NS4B, NS5A and the RNA-directed RNA polymerase. Interacts with host GRB2. Interacts with host BIN1. Interacts with host PIK3R1. Interacts with host SRCAP. Interacts with host FKBP8. Interacts with host VAPB. Interacts with host EIF2AK2/PKR; this interaction leads to disruption of EIF2AK2 dimerization by NS5A and probably allows the virus to evade the innate immune response. Interacts (via N-terminus) with host PACSIN2 (via N-terminus); this interaction attenuates protein kinase C alpha-mediated phosphorylation of PACSIN2 by disrupting the interaction between PACSIN2 and PRKCA. Interacts (via N-terminus) with host SRC kinase (via SH2 domain). Interacts with most Src-family kinases. Interacts with host IFI27 and SKP2; promotes the ubiquitin-mediated proteasomal degradation of NS5A. Interacts with host GPS2. Interacts with host TNFRSF21; this interaction allows the modulation by the virus of JNK, p38 MAPK, STAT3, and Akt signaling pathways in a DR6-dependent manner. Interacts (via N-terminus) with host CIDEB (via N-terminus); this interaction seems to regulate the association of HCV particles with APOE. Interacts with host CHKA/Choline Kinase-alpha; CHKA bridges host PI4KA and NS5A and potentiates NS5A-stimulated PI4KA activity, which then facilitates the targeting of the ternary complex to the ER for viral replication. Interacts with host SPSB2 (via C-terminus); this interaction targets NS5A for ubiquitination and degradation. Interacts with host RAB18; this interaction may promote the association of NS5A and other replicase components with lipid droplets. Interacts with host TRIM14; this interaction induces the degradation of NS5A. Homooligomer. Interacts with non-structural protein 5A. Interacts with host VAPB. Interacts with host PRK2/PKN2. Interacts with host HNRNPA1 and SEPT6; these interactions facilitate viral replication. Part of the replication complex composed of NS2, NS3, NS4A, NS4B, NS5A and the RNA-directed RNA polymerase. Initiates RNA transcription/replication at a flavin adenine dinucleotide (FAD), resulting in a 5'- FAD cap on viral RNAs. In this way, recognition of viral 5' RNA by host pattern recognition receptors can be bypassed, thereby evading activation of antiviral pathways. It depends on Zn(2+) as a cofactor. The cofactor is Mg(2+). Specific enzymatic cleavages in vivo yield mature proteins. The structural proteins, core, E1, E2 and p7 are produced by proteolytic processing by host signal peptidases. The core protein precursor is synthesized as a 23 kDa protein which is retained in the ER membrane through the hydrophobic signal peptide. Cleavage by the signal peptidase releases the 21 kDa mature core protein. The cleavage of the core protein precursor occurs between aminoacids 176 and 188 but the exact cleavage site is not known. Some degraded forms of the core protein appear as well during the course of infection. The other proteins (p7, NS2, NS3, NS4A, NS4B, NS5A and NS5B) are cleaved by the viral proteases. Autoprocessing between NS2 and NS3 is mediated by the NS2 cysteine protease catalytic domain and regulated by the NS3 N-terminal domain. In terms of processing, phosphorylated by host PKC and PKA. Post-translationally, ubiquitinated; mediated by UBE3A and leading to core protein subsequent proteasomal degradation. Highly N-glycosylated. In terms of processing, palmitoylation is required for NS2/3 autoprocessing and E2 recruitment to membranes. Post-translationally, palmitoylated. This modification may play a role in its polymerization or in protein-protein interactions. Cleaved by host caspases which are probably activated by the viral infection. In terms of processing, ubiquitinated. Ubiquitination, most probably at Lys-2350, mediated by host IFI27 and SKP2 leads to proteasomal degradation, restricting viral infection. Post-translationally, phosphorylated on serines in a basal form termed p56. p58 is a hyperphosphorylated form of p56. p56 and p58 coexist in the cell in roughly equivalent amounts. Hyperphosphorylation is dependent on the presence of NS4A. Host CSNK1A1/CKI-alpha or RPS6KB1 kinases may be responsible for NS5A phosphorylation. Phosphorylated NS5A is involved in viral replication. Tyrosine phosphorylation is essential for the interaction with host SRC. In terms of processing, the N-terminus is phosphorylated by host PRK2/PKN2.

The protein resides in the host endoplasmic reticulum membrane. It is found in the host mitochondrion membrane. Its subcellular location is the virion. The protein localises to the host cytoplasm. It localises to the host nucleus. The protein resides in the host lipid droplet. It is found in the virion membrane. Its subcellular location is the host mitochondrion. The protein localises to the host cell membrane. It localises to the host perinuclear region. It catalyses the reaction Hydrolysis of four peptide bonds in the viral precursor polyprotein, commonly with Asp or Glu in the P6 position, Cys or Thr in P1 and Ser or Ala in P1'.. The enzyme catalyses a ribonucleoside 5'-triphosphate + H2O = a ribonucleoside 5'-diphosphate + phosphate + H(+). The catalysed reaction is ATP + H2O = ADP + phosphate + H(+). It carries out the reaction RNA(n) + a ribonucleoside 5'-triphosphate = RNA(n+1) + diphosphate. Its activity is regulated as follows. Inhibited by the antiviral drug hexamethylene amiloride. Inhibition by amantadine appears to be genotype-dependent. Also inhibited by long-alkyl-chain iminosugar derivatives. With respect to regulation, activity is up-regulated by PRK2/PKN2-mediated phosphorylation. Its function is as follows. Packages viral RNA to form a viral nucleocapsid, and promotes virion budding. Participates in the viral particle production as a result of its interaction with the non-structural protein 5A. Binds RNA and may function as a RNA chaperone to induce the RNA structural rearrangements taking place during virus replication. Modulates viral translation initiation by interacting with viral IRES and 40S ribosomal subunit. Affects various cell signaling pathways, host immunity and lipid metabolism. Prevents the establishment of cellular antiviral state by blocking the interferon-alpha/beta (IFN-alpha/beta) and IFN-gamma signaling pathways and by blocking the formation of phosphorylated STAT1 and promoting ubiquitin-mediated proteasome-dependent degradation of STAT1. Activates STAT3 leading to cellular transformation. Regulates the activity of cellular genes, including c-myc and c-fos. May repress the promoter of p53, and sequester CREB3 and SP110 isoform 3/Sp110b in the cytoplasm. Represses cell cycle negative regulating factor CDKN1A, thereby interrupting an important check point of normal cell cycle regulation. Targets transcription factors involved in the regulation of inflammatory responses and in the immune response: suppresses TNF-induced NF-kappa-B activation, and activates AP-1. Binds to dendritic cells (DCs) via C1QR1, resulting in down-regulation of T-lymphocytes proliferation. Alters lipid metabolism by interacting with hepatocellular proteins involved in lipid accumulation and storage. Induces up-regulation of FAS promoter activity, and thereby contributes to the increased triglyceride accumulation in hepatocytes (steatosis). Functionally, forms a heterodimer with envelope glycoprotein E2, which mediates virus attachment to the host cell, virion internalization through clathrin-dependent endocytosis and fusion with host membrane. Fusion with the host cell is most likely mediated by both E1 and E2, through conformational rearrangements of the heterodimer required for fusion rather than a classical class II fusion mechanism. E1/E2 heterodimer binds host apolipoproteins such as APOB and APOE thereby forming a lipo-viro-particle (LVP). APOE associated to the LVP allows the initial virus attachment to cell surface receptors such as the heparan sulfate proteoglycans (HSPGs), syndecan-1 (SDC1), syndecan-1 (SDC2), the low-density lipoprotein receptor (LDLR) and scavenger receptor class B type I (SCARB1). The cholesterol transfer activity of SCARB1 allows E2 exposure and binding of E2 to SCARB1 and the tetraspanin CD81. E1/E2 heterodimer binding on CD81 activates the epithelial growth factor receptor (EGFR) signaling pathway. Diffusion of the complex E1-E2-EGFR-SCARB1-CD81 to the cell lateral membrane allows further interaction with Claudin 1 (CLDN1) and occludin (OCLN) to finally trigger HCV entry. Forms a heterodimer with envelope glycoprotein E1, which mediates virus attachment to the host cell, virion internalization through clathrin-dependent endocytosis and fusion with host membrane. Fusion with the host cell is most likely mediated by both E1 and E2, through conformational rearrangements of the heterodimer required for fusion rather than a classical class II fusion mechanism. The interaction between envelope glycoprotein E2 and host apolipoprotein E/APOE allows the proper assembly, maturation and infectivity of the viral particles. This interaction is probably promoted via the up-regulation of cellular autophagy by the virus. E1/E2 heterodimer binds host apolipoproteins such as APOB and APOE thereby forming a lipo-viro-particle (LVP). APOE associated to the LVP allows the initial virus attachment to cell surface receptors such as the heparan sulfate proteoglycans (HSPGs), syndecan-1 (SDC1), syndecan-1 (SDC2), the low-density lipoprotein receptor (LDLR) and scavenger receptor class B type I (SCARB1). The cholesterol transfer activity of SCARB1 allows E2 exposure and binding of E2 to SCARB1 and the tetraspanin CD81. E1/E2 heterodimer binding on CD81 activates the epithelial growth factor receptor (EGFR) signaling pathway. Diffusion of the complex E1-E2-EGFR-SCARB1-CD81 to the cell lateral membrane allows further interaction with Claudin 1 (CLDN1) and occludin (OCLN) to finally trigger HCV entry. Inhibits host EIF2AK2/PKR activation, preventing the establishment of an antiviral state. Viral ligand for CD209/DC-SIGN and CLEC4M/DC-SIGNR, which are respectively found on dendritic cells (DCs), and on liver sinusoidal endothelial cells and macrophage-like cells of lymph node sinuses. These interactions allow the capture of circulating HCV particles by these cells and subsequent facilitated transmission to permissive cells such as hepatocytes and lymphocyte subpopulations. The interaction between E2 and host amino acid transporter complex formed by SLC3A2 and SLC7A5/LAT1 may facilitate viral entry into host cell. In terms of biological role, ion channel protein that acts as a viroporin and plays an essential role in the assembly, envelopment and secretion of viral particles. Regulates the host cell secretory pathway, which induces the intracellular retention of viral glycoproteins and favors assembly of viral particles. Creates a pore in acidic organelles and releases Ca(2+) and H(+) in the cytoplasm of infected cells, leading to a productive viral infection. High levels of cytoplasmic Ca(2+) may trigger membrane trafficking and transport of viral ER-associated proteins to viroplasms, sites of viral genome replication. This ionic imbalance induces the assembly of the inflammasome complex, which triggers the maturation of pro-IL-1beta into IL-1beta through the action of caspase-1. Targets also host mitochondria and induces mitochondrial depolarization. In addition of its role as a viroporin, acts as a lipid raft adhesion factor. Its function is as follows. Cysteine protease required for the proteolytic auto-cleavage between the non-structural proteins NS2 and NS3. The N-terminus of NS3 is required for the function of NS2 protease (active region NS2-3). Promotes the initiation of viral particle assembly by mediating the interaction between structural and non-structural proteins. Functionally, displays three enzymatic activities: serine protease with a chymotrypsin-like fold, NTPase and RNA helicase. NS3 serine protease, in association with NS4A, is responsible for the cleavages of NS3-NS4A, NS4A-NS4B, NS4B-NS5A and NS5A-NS5B. The NS3/NS4A complex prevents phosphorylation of host IRF3, thus preventing the establishment of dsRNA induced antiviral state. The NS3/NS4A complex induces host amino acid transporter component SLC3A2, thus contributing to HCV propagation. NS3 RNA helicase binds to RNA and unwinds both dsDNA and dsRNA in the 3' to 5' direction, and likely resolves RNA complicated stable secondary structures in the template strand. Binds a single ATP and catalyzes the unzipping of a single base pair of dsRNA. Inhibits host antiviral proteins TBK1 and IRF3 thereby preventing the establishment of an antiviral state. Cleaves host MAVS/CARDIF thereby preventing the establishment of an antiviral state. Cleaves host TICAM1/TRIF, thereby disrupting TLR3 signaling and preventing the establishment of an antiviral state. The NS3/NS4A complex prevents phosphorylation of host IRF3, thus preventing the establishment of dsRNA induced antiviral state. The NS3/NS4A complex induces host amino acid transporter component SLC3A2, thus contributing to HCV propagation. In terms of biological role, induces a specific membrane alteration that serves as a scaffold for the virus replication complex. This membrane alteration gives rise to the so-called ER-derived membranous web that contains the replication complex. NS4B self-interaction contributes to its function in membranous web formation. Promotes host TRIF protein degradation in a CASP8-dependent manner thereby inhibiting host TLR3-mediated interferon signaling. Disrupts the interaction between STING and TBK1 contributing to the inhibition of interferon signaling. Its function is as follows. Phosphorylated protein that is indispensable for viral replication and assembly. Both hypo- and hyperphosphorylated states are required for the viral life cycle. The hyperphosphorylated form of NS5A is an inhibitor of viral replication. Involved in RNA-binding and especially in binding to the viral genome. Zinc is essential for RNA-binding. Participates in the viral particle production as a result of its interaction with the mature viral core protein. Its interaction with host VAPB may target the viral replication complex to vesicles. Down-regulates viral IRES translation initiation. Mediates interferon resistance, presumably by interacting with and inhibiting host EIF2AK2/PKR. Prevents BIN1-induced apoptosis. Acts as a transcriptional activator of some host genes important for viral replication when localized in the nucleus. Via the interaction with host PACSIN2, modulates lipid droplet formation in order to promote virion assembly. Modulates TNFRSF21/DR6 signaling pathway for viral propagation. Functionally, RNA-dependent RNA polymerase that performs primer-template recognition and RNA synthesis during viral replication. Initiates RNA transcription/replication at a flavin adenine dinucleotide (FAD), resulting in a 5'- FAD cap on viral RNAs. In this way, recognition of viral 5' RNA by host pattern recognition receptors can be bypassed, thereby evading activation of antiviral pathways. This chain is Genome polyprotein, found in Homo sapiens (Human).